We begin with the raw amino-acid sequence, 274 residues long: Pyrroline-5-carboxylate reductase 3 (274 aa).

Residue A2 is modified to N-acetylalanine.

Belongs to the pyrroline-5-carboxylate reductase family. In terms of assembly, homodecamer; composed of 5 homodimers.

It is found in the cytoplasm. The enzyme catalyses L-proline + NADP(+) = (S)-1-pyrroline-5-carboxylate + NADPH + 2 H(+). The catalysed reaction is L-proline + NAD(+) = (S)-1-pyrroline-5-carboxylate + NADH + 2 H(+). Its pathway is amino-acid biosynthesis; L-proline biosynthesis; L-proline from L-glutamate 5-semialdehyde: step 1/1. Its function is as follows. Oxidoreductase that catalyzes the last step in proline biosynthesis, which corresponds to the reduction of pyrroline-5-carboxylate (P5C) to L-proline using NAD(P)H. Proline is synthesized from either glutamate or ornithine; both are converted to P5C, and then to proline via pyrroline-5-carboxylate reductases (PYCRs). PYCR3 is exclusively linked to the biosynthesis of proline from ornithine. This is Pyrroline-5-carboxylate reductase 3 from Macaca fascicularis (Crab-eating macaque).